Consider the following 429-residue polypeptide: MSNKLFRLDAGYQQYDWGKIGSSSAVAQFAAHSDPSVQIEQDKPYAELWMGTHSKMPSYNHESKESLRDIISKNPSAMLGKDIIDKFHATNELPFLFKVLSIEKVLSIQAHPDKALGKILHAQDPKNYPDDNHKPEMAIAVTDFEGFCGFKPLQEIADELKRIPELRNIVGEETSRNFIENIQPSAQKGSPEDEQNKKLLQAVFSRVMNASDDKIKIQARSLVERSKNSPSDFNKPDLPELIQRLNKQFPDDVGLFCGCLLLNHCRLNAGEAIFLRAKDPHAYISGDIMECMAASDNVVRAGFTPKFKDVKNLVSMLTYTYDPVEKQKMQPLKFDRSSGNGKSVLYNPPIEEFAVLETTFDEKLGQRHFEGVDGPSILITTKGNGYIKADGQKLKAEPGFVFFIAPHLPVDLEAEDEAFTTYRAFVEPN.

Residue S2 is modified to N-acetylserine. A Phosphoserine modification is found at S107. 4 residues coordinate Zn(2+): Q109, H111, E136, and H281. Residue R300 is part of the active site.

This sequence belongs to the mannose-6-phosphate isomerase type 1 family. Monomer. Zn(2+) is required as a cofactor.

The protein localises to the cytoplasm. It carries out the reaction D-mannose 6-phosphate = D-fructose 6-phosphate. It participates in nucleotide-sugar biosynthesis; GDP-alpha-D-mannose biosynthesis; alpha-D-mannose 1-phosphate from D-fructose 6-phosphate: step 1/2. With respect to regulation, can be inhibited by an excess of zinc. Functionally, involved in the synthesis of the GDP-mannose and dolichol-phosphate-mannose required for a number of critical mannosyl transfer reactions. In Saccharomyces cerevisiae (strain ATCC 204508 / S288c) (Baker's yeast), this protein is Mannose-6-phosphate isomerase (PMI40).